Consider the following 381-residue polypeptide: Protein kinase gsk31 (381 aa).

A Protein kinase domain is found at 25 to 309 (YEPCRVLGSG…AIEVLTHPFF (285 aa)). ATP is bound by residues 31 to 39 (LGSGSFGVV) and lysine 54. Catalysis depends on aspartate 150, which acts as the Proton acceptor. Phosphoserine is present on serine 184. Tyrosine 185 is modified (phosphotyrosine).

Belongs to the protein kinase superfamily. CMGC Ser/Thr protein kinase family. GSK-3 subfamily.

It catalyses the reaction L-seryl-[protein] + ATP = O-phospho-L-seryl-[protein] + ADP + H(+). The catalysed reaction is L-threonyl-[protein] + ATP = O-phospho-L-threonyl-[protein] + ADP + H(+). In Schizosaccharomyces pombe (strain 972 / ATCC 24843) (Fission yeast), this protein is Protein kinase gsk31 (gsk31).